The following is a 501-amino-acid chain: UPF0288 protein Maeo_0995 (501 aa).

Belongs to the UPF0288 family.

This Methanococcus aeolicus (strain ATCC BAA-1280 / DSM 17508 / OCM 812 / Nankai-3) protein is UPF0288 protein Maeo_0995.